The primary structure comprises 519 residues: Cysteine--tRNA ligase (519 aa).

Zn(2+) is bound at residue cysteine 30. The 'HIGH' region signature appears at proline 32–asparagine 42. Zn(2+) is bound by residues cysteine 221, histidine 253, and glutamate 257. The 'KMSKS' region motif lies at lysine 286–serine 290. Lysine 289 lines the ATP pocket.

The protein belongs to the class-I aminoacyl-tRNA synthetase family. Monomer. Zn(2+) is required as a cofactor.

It is found in the cytoplasm. It carries out the reaction tRNA(Cys) + L-cysteine + ATP = L-cysteinyl-tRNA(Cys) + AMP + diphosphate. This chain is Cysteine--tRNA ligase, found in Cereibacter sphaeroides (strain KD131 / KCTC 12085) (Rhodobacter sphaeroides).